A 542-amino-acid chain; its full sequence is Glucans biosynthesis protein D (542 aa).

A signal peptide (tat-type signal) is located at residues Met1–Ala31.

The protein belongs to the OpgD/OpgG family. Predicted to be exported by the Tat system. The position of the signal peptide cleavage has not been experimentally proven.

Its subcellular location is the periplasm. It functions in the pathway glycan metabolism; osmoregulated periplasmic glucan (OPG) biosynthesis. Functionally, probably involved in the control of the structural glucose backbone of osmoregulated periplasmic glucans (OPGs). This Pseudomonas fluorescens (strain Pf0-1) protein is Glucans biosynthesis protein D.